A 71-amino-acid chain; its full sequence is Small ribosomal subunit protein bS21 (71 aa).

The disordered stretch occupies residues 43 to 71 (TERKRAKASAVKRHAKKLARENARRTRLY). Residues 46 to 59 (KRAKASAVKRHAKK) are compositionally biased toward basic residues. The span at 60 to 71 (LARENARRTRLY) shows a compositional bias: basic and acidic residues.

Belongs to the bacterial ribosomal protein bS21 family.

This chain is Small ribosomal subunit protein bS21, found in Pectobacterium atrosepticum (strain SCRI 1043 / ATCC BAA-672) (Erwinia carotovora subsp. atroseptica).